We begin with the raw amino-acid sequence, 498 residues long: Lysine--tRNA ligase (498 aa).

Mg(2+)-binding residues include Glu-411 and Glu-418.

The protein belongs to the class-II aminoacyl-tRNA synthetase family. As to quaternary structure, homodimer. It depends on Mg(2+) as a cofactor.

It localises to the cytoplasm. The catalysed reaction is tRNA(Lys) + L-lysine + ATP = L-lysyl-tRNA(Lys) + AMP + diphosphate. The chain is Lysine--tRNA ligase from Enterococcus faecalis (strain ATCC 700802 / V583).